We begin with the raw amino-acid sequence, 371 residues long: Dihydroorotate dehydrogenase (quinone) (371 aa).

FMN contacts are provided by residues A79–K83 and T103. K83 is a substrate binding site. N128 to F132 lines the substrate pocket. FMN is bound by residues N156 and N189. N189 provides a ligand contact to substrate. S192 (nucleophile) is an active-site residue. Residue N194 participates in substrate binding. FMN contacts are provided by K225 and T253. N254 to T255 contributes to the substrate binding site. Residues G279, G308, and Y329–T330 contribute to the FMN site.

This sequence belongs to the dihydroorotate dehydrogenase family. Type 2 subfamily. As to quaternary structure, monomer. FMN serves as cofactor.

The protein resides in the cell membrane. It catalyses the reaction (S)-dihydroorotate + a quinone = orotate + a quinol. It participates in pyrimidine metabolism; UMP biosynthesis via de novo pathway; orotate from (S)-dihydroorotate (quinone route): step 1/1. Catalyzes the conversion of dihydroorotate to orotate with quinone as electron acceptor. This Corynebacterium glutamicum (strain ATCC 13032 / DSM 20300 / JCM 1318 / BCRC 11384 / CCUG 27702 / LMG 3730 / NBRC 12168 / NCIMB 10025 / NRRL B-2784 / 534) protein is Dihydroorotate dehydrogenase (quinone).